Consider the following 329-residue polypeptide: Minor capsid protein A1 (329 aa).

The protein localises to the virion. Minor capsid protein. The sequence is that of Minor capsid protein A1 from Escherichia coli (Bacteriophage Q-beta).